The following is a 70-amino-acid chain: Conotoxin Im23.3 (70 aa).

An N-terminal signal peptide occupies residues 1-22; it reads MIMRMTLTLFVLVVMTAASASG. Positions 23–28 are excised as a propeptide; it reads DALTEA. 3 disulfide bridges follow: Cys34/Cys41, Cys45/Cys53, and Cys54/Cys69.

It belongs to the conotoxin K superfamily. Expressed by the venom duct.

The protein resides in the secreted. Neurotoxin that induces excitatory symptoms in mice following intracranial administration. No symptoms are observed after intraperitoneal and intravenous (tail vein) injections. In Conus imperialis (Imperial cone), this protein is Conotoxin Im23.3.